The sequence spans 117 residues: MLEGGVVSRKRRKRILKLAKGYYGAKHLLFRTAKEQVMNSYYYAYRDRRQKKRDFRKLWITRINAAARMNGLSYSQLMHGLKLAEIEVNRKMLADLAVNDAAAFTALADAAKAKLAK.

Belongs to the bacterial ribosomal protein bL20 family.

In terms of biological role, binds directly to 23S ribosomal RNA and is necessary for the in vitro assembly process of the 50S ribosomal subunit. It is not involved in the protein synthesizing functions of that subunit. The protein is Large ribosomal subunit protein bL20 of Streptococcus suis (strain 05ZYH33).